Reading from the N-terminus, the 54-residue chain is uncharacterized protein (54 aa).

This is an uncharacterized protein from Escherichia coli (strain K12).